A 239-amino-acid chain; its full sequence is Isoprenyl transferase (239 aa).

Asp-16 is an active-site residue. Asp-16 lines the Mg(2+) pocket. Residues 17–20, Trp-21, Arg-29, His-33, and 61–63 each bind substrate; these read GNGR and STE. Residue Asn-64 is the Proton acceptor of the active site. Residues Trp-65, Arg-67, Arg-187, and 193–195 contribute to the substrate site; that span reads RLS. Residue Glu-206 coordinates Mg(2+).

Belongs to the UPP synthase family. As to quaternary structure, homodimer. The cofactor is Mg(2+).

In terms of biological role, catalyzes the condensation of isopentenyl diphosphate (IPP) with allylic pyrophosphates generating different type of terpenoids. The protein is Isoprenyl transferase of Lactobacillus johnsonii (strain CNCM I-12250 / La1 / NCC 533).